The chain runs to 312 residues: Malate dehydrogenase (312 aa).

Residues 7–13 (GAAGGIG) and D34 each bind NAD(+). Residues R81 and R87 each coordinate substrate. Residues N94 and 117–119 (ITN) each bind NAD(+). 2 residues coordinate substrate: N119 and R153. The Proton acceptor role is filled by H177. M227 provides a ligand contact to NAD(+).

This sequence belongs to the LDH/MDH superfamily. MDH type 1 family. Homodimer.

It carries out the reaction (S)-malate + NAD(+) = oxaloacetate + NADH + H(+). Catalyzes the reversible oxidation of malate to oxaloacetate. This Escherichia coli O6:K15:H31 (strain 536 / UPEC) protein is Malate dehydrogenase.